A 361-amino-acid chain; its full sequence is Peptide chain release factor 1 (361 aa).

Q238 bears the N5-methylglutamine mark.

This sequence belongs to the prokaryotic/mitochondrial release factor family. Post-translationally, methylated by PrmC. Methylation increases the termination efficiency of RF1.

The protein localises to the cytoplasm. In terms of biological role, peptide chain release factor 1 directs the termination of translation in response to the peptide chain termination codons UAG and UAA. The polypeptide is Peptide chain release factor 1 (Mesomycoplasma hyopneumoniae (strain 7448) (Mycoplasma hyopneumoniae)).